We begin with the raw amino-acid sequence, 453 residues long: Bifunctional protein GlmU (453 aa).

The segment at 1–225 (MNIVILAAGT…EWETLGVNSK (225 aa)) is pyrophosphorylase. Residues 6–9 (LAAG), Lys-20, Gln-71, 76–77 (GT), 98–100 (YGD), Gly-135, Glu-150, Asn-165, and Asn-223 contribute to the UDP-N-acetyl-alpha-D-glucosamine site. Asp-100 lines the Mg(2+) pocket. Residue Asn-223 coordinates Mg(2+). Positions 226–246 (AQLAELERIHQRNLADALLAA) are linker. The tract at residues 247-453 (GVTLADPARI…GYVRPVKKKS (207 aa)) is N-acetyltransferase. Residues Arg-329 and Lys-347 each contribute to the UDP-N-acetyl-alpha-D-glucosamine site. His-359 (proton acceptor) is an active-site residue. UDP-N-acetyl-alpha-D-glucosamine-binding residues include Tyr-362 and Asn-373. Residues Ala-376, 382 to 383 (NY), Ser-401, and Ala-419 contribute to the acetyl-CoA site.

In the N-terminal section; belongs to the N-acetylglucosamine-1-phosphate uridyltransferase family. This sequence in the C-terminal section; belongs to the transferase hexapeptide repeat family. As to quaternary structure, homotrimer. The cofactor is Mg(2+).

Its subcellular location is the cytoplasm. It catalyses the reaction alpha-D-glucosamine 1-phosphate + acetyl-CoA = N-acetyl-alpha-D-glucosamine 1-phosphate + CoA + H(+). It carries out the reaction N-acetyl-alpha-D-glucosamine 1-phosphate + UTP + H(+) = UDP-N-acetyl-alpha-D-glucosamine + diphosphate. It functions in the pathway nucleotide-sugar biosynthesis; UDP-N-acetyl-alpha-D-glucosamine biosynthesis; N-acetyl-alpha-D-glucosamine 1-phosphate from alpha-D-glucosamine 6-phosphate (route II): step 2/2. The protein operates within nucleotide-sugar biosynthesis; UDP-N-acetyl-alpha-D-glucosamine biosynthesis; UDP-N-acetyl-alpha-D-glucosamine from N-acetyl-alpha-D-glucosamine 1-phosphate: step 1/1. It participates in bacterial outer membrane biogenesis; LPS lipid A biosynthesis. Functionally, catalyzes the last two sequential reactions in the de novo biosynthetic pathway for UDP-N-acetylglucosamine (UDP-GlcNAc). The C-terminal domain catalyzes the transfer of acetyl group from acetyl coenzyme A to glucosamine-1-phosphate (GlcN-1-P) to produce N-acetylglucosamine-1-phosphate (GlcNAc-1-P), which is converted into UDP-GlcNAc by the transfer of uridine 5-monophosphate (from uridine 5-triphosphate), a reaction catalyzed by the N-terminal domain. The protein is Bifunctional protein GlmU of Burkholderia mallei (strain NCTC 10247).